We begin with the raw amino-acid sequence, 432 residues long: Lecithin-cholesterol acyltransferase-like 1 (432 aa).

A helical transmembrane segment spans residues 7 to 29 (HYSVVIAILVVVTMTSMCQAVGS). Catalysis depends on S209, which acts as the Acyl-ester intermediate. Residues D374 and H400 each act as charge relay system in the active site.

This sequence belongs to the AB hydrolase superfamily. Lipase family.

It is found in the membrane. This is Lecithin-cholesterol acyltransferase-like 1 (LCAT1) from Arabidopsis thaliana (Mouse-ear cress).